A 517-amino-acid polypeptide reads, in one-letter code: Aspartyl/glutamyl-tRNA(Asn/Gln) amidotransferase subunit B (517 aa).

Belongs to the GatB/GatE family. GatB subfamily. As to quaternary structure, heterotrimer of A, B and C subunits.

It catalyses the reaction L-glutamyl-tRNA(Gln) + L-glutamine + ATP + H2O = L-glutaminyl-tRNA(Gln) + L-glutamate + ADP + phosphate + H(+). The enzyme catalyses L-aspartyl-tRNA(Asn) + L-glutamine + ATP + H2O = L-asparaginyl-tRNA(Asn) + L-glutamate + ADP + phosphate + 2 H(+). In terms of biological role, allows the formation of correctly charged Asn-tRNA(Asn) or Gln-tRNA(Gln) through the transamidation of misacylated Asp-tRNA(Asn) or Glu-tRNA(Gln) in organisms which lack either or both of asparaginyl-tRNA or glutaminyl-tRNA synthetases. The reaction takes place in the presence of glutamine and ATP through an activated phospho-Asp-tRNA(Asn) or phospho-Glu-tRNA(Gln). This is Aspartyl/glutamyl-tRNA(Asn/Gln) amidotransferase subunit B from Thermobifida fusca (strain YX).